The following is a 594-amino-acid chain: Arginine--tRNA ligase (594 aa).

The 'HIGH' region motif lies at 139-149 (ANPTGPLHVGH).

Belongs to the class-I aminoacyl-tRNA synthetase family. As to quaternary structure, monomer.

It is found in the cytoplasm. The catalysed reaction is tRNA(Arg) + L-arginine + ATP = L-arginyl-tRNA(Arg) + AMP + diphosphate. The protein is Arginine--tRNA ligase of Burkholderia mallei (strain NCTC 10247).